A 68-amino-acid polypeptide reads, in one-letter code: Large ribosomal subunit protein uL30 (68 aa).

The segment at 1–26 (MSAKKSASKATVTVQQIGSPLRREPS) is disordered. The segment covering 8-18 (SKATVTVQQIG) has biased composition (polar residues).

It belongs to the universal ribosomal protein uL30 family. In terms of assembly, part of the 50S ribosomal subunit.

The chain is Large ribosomal subunit protein uL30 from Parvibaculum lavamentivorans (strain DS-1 / DSM 13023 / NCIMB 13966).